We begin with the raw amino-acid sequence, 669 residues long: Translation factor GUF1, mitochondrial (669 aa).

The N-terminal 49 residues, 1-49 (MWTLAGQGWWRGRALAAWVTEAARKGLLWPHLAPARGTAAESRAPDRCY), are a transit peptide targeting the mitochondrion. One can recognise a tr-type G domain in the interval 66–247 (ENTRNFSIIA…AVIKRIPFPK (182 aa)). Residues 75–82 (AHVDHGKS), 140–144 (DTPGH), and 194–197 (NKID) contribute to the GTP site.

This sequence belongs to the TRAFAC class translation factor GTPase superfamily. Classic translation factor GTPase family. LepA subfamily.

The protein resides in the mitochondrion inner membrane. The catalysed reaction is GTP + H2O = GDP + phosphate + H(+). Promotes mitochondrial protein synthesis. May act as a fidelity factor of the translation reaction, by catalyzing a one-codon backward translocation of tRNAs on improperly translocated ribosomes. Binds to mitochondrial ribosomes in a GTP-dependent manner. The sequence is that of Translation factor GUF1, mitochondrial from Bos taurus (Bovine).